Reading from the N-terminus, the 352-residue chain is Histidinol-phosphate aminotransferase (352 aa).

Lysine 211 carries the post-translational modification N6-(pyridoxal phosphate)lysine.

It belongs to the class-II pyridoxal-phosphate-dependent aminotransferase family. Histidinol-phosphate aminotransferase subfamily. In terms of assembly, homodimer. It depends on pyridoxal 5'-phosphate as a cofactor.

The catalysed reaction is L-histidinol phosphate + 2-oxoglutarate = 3-(imidazol-4-yl)-2-oxopropyl phosphate + L-glutamate. The protein operates within amino-acid biosynthesis; L-histidine biosynthesis; L-histidine from 5-phospho-alpha-D-ribose 1-diphosphate: step 7/9. In Haemophilus influenzae (strain PittGG), this protein is Histidinol-phosphate aminotransferase.